Consider the following 200-residue polypeptide: Protein GrpE (200 aa).

Composition is skewed to acidic residues over residues 1–17 (MNEQ…EQFD) and 34–44 (AFAEAGEETRD). The disordered stretch occupies residues 1–49 (MNEQPNEELQSEDEQFDPQETVSFEGETAANDEAFAEAGEETRDEEMTR).

Belongs to the GrpE family. As to quaternary structure, homodimer.

It is found in the cytoplasm. Functionally, participates actively in the response to hyperosmotic and heat shock by preventing the aggregation of stress-denatured proteins, in association with DnaK and GrpE. It is the nucleotide exchange factor for DnaK and may function as a thermosensor. Unfolded proteins bind initially to DnaJ; upon interaction with the DnaJ-bound protein, DnaK hydrolyzes its bound ATP, resulting in the formation of a stable complex. GrpE releases ADP from DnaK; ATP binding to DnaK triggers the release of the substrate protein, thus completing the reaction cycle. Several rounds of ATP-dependent interactions between DnaJ, DnaK and GrpE are required for fully efficient folding. The polypeptide is Protein GrpE (Rhodopirellula baltica (strain DSM 10527 / NCIMB 13988 / SH1)).